The primary structure comprises 544 residues: Probable protein kinase UbiB (544 aa).

The 379-residue stretch at 123-501 folds into the Protein kinase domain; sequence DFDIEPLASA…KRQQATGKFL (379 aa). ATP is bound by residues 129-137 and lysine 152; that span reads LASASIAQV. Aspartate 287 acts as the Proton acceptor in catalysis. Residues 500 to 520 form a helical membrane-spanning segment; sequence FLFGVGATLVVCSAILVSSPY.

The protein belongs to the ABC1 family. UbiB subfamily.

The protein resides in the cell inner membrane. The protein operates within cofactor biosynthesis; ubiquinone biosynthesis [regulation]. In terms of biological role, is probably a protein kinase regulator of UbiI activity which is involved in aerobic coenzyme Q (ubiquinone) biosynthesis. The protein is Probable protein kinase UbiB of Vibrio atlanticus (strain LGP32) (Vibrio splendidus (strain Mel32)).